Here is a 609-residue protein sequence, read N- to C-terminus: Adagio protein 1 (609 aa).

Positions 1 to 17 are enriched in low complexity; the sequence is MEWDSGSDLSADDASSL. The tract at residues 1–24 is disordered; it reads MEWDSGSDLSADDASSLADDEEGG. Residues 32-114 enclose the PAS domain; the sequence is IPYPVGNLLH…SEIRKCIDEG (83 aa). S-4a-FMN cysteine is present on Cys82. The 44-residue stretch at 118 to 161 folds into the PAC domain; the sequence is QGELLNFRKDGSPLMNRLRLTPIYGDDDTITHIIGIQFFIETDI. The F-box domain occupies 195–241; the sequence is CGLFQLSDEVVSMKILSRLTPRDVASVSSVCRRLYVLTKNEDLWRRV. Kelch repeat units follow at residues 292–342, 345–392, 397–445, 450–501, and 516–564; these read SRCN…SSPP, RWGH…SGLA, RSWH…PAAW, RLGH…TGSG, and RLDH…NIPG.

The protein belongs to the ADAGIO family. As to quaternary structure, interacts with NFXL2. Interacts (via N-terminus) with GI and (via Kelch repeats) with ADO3. Component of an E3 ubiquitin ligase SCF(ADO1) complex composed of SKP1A/ASK1 (or SKP1B/ASK2), CUL1, RBX1 and ADO1. Also interacts with SKP1D/ASK4, SKP1K/ASK11, CRY1, PHYB, APRR1 and APRR5, and probably with SKP1N/ASK14 and SKP1S/ASK19. Post-translationally, may be ubiquitinated. Degraded in a proteasome-dependent manner. In terms of processing, FMN binds covalently to cysteine after exposure to blue light and is reversed in the dark. Ubiquitously expressed with higher levels in cotyledons and leaves.

The protein resides in the nucleus. The protein localises to the cytoplasm. It participates in protein modification; protein ubiquitination. Its function is as follows. Component of an E3 ubiquitin ligase complex that plays a central role in blue light-dependent circadian cycles. Acts as a blue light photoreceptor, due to the presence of FMN, that mediates light-regulated protein degradation of critical clock components by targeting them to the proteasome complex. The SCF(ADO1) E3 ubiquitin ligase complex is involved in the regulation of circadian clock-dependent processes including the transition to flowering time, hypocotyl elongation, cotyledons and leaf movement rhythms. APRR1/TOC1 and APRR5, but not 'GIGANTEA', are proteolytic substrates of this ubiquitin ligase complex. Blue light enhances cooperative stabilization of 'GIGANTEA' and ADO1/ZTL, leading to amplification and sharpening of the expression profile of APRR1/TOC1. ADO1/ZTL interacts with ADO3, preventing the interaction of ADO3 with CDF1. This Arabidopsis thaliana (Mouse-ear cress) protein is Adagio protein 1 (ADO1).